Reading from the N-terminus, the 1069-residue chain is MLVRRLFQPSTLHWAWRTTALNHPLGRHQGGLRWTHSGGRSYRAVIFDTGGVLVPSPGTVAVGWEVQNHVPSGTIVKAFIRGGDSGPWIRFIKGEITTEHFLEEFGRLCSEIAKTSVPVSSYFSLLTSEQVTKQFPVMTQAISQIRAKGLQTAVLTNNFHLSSGESFLPLDRKQFDVVVESCLEGICKPDPRIFQLCLQRLSLQPSEAIFLDDLGSNLKVAASLGIHTIKVDRPETAVKELEALLGFPLHLGVPNTRPVRKTMAIPQDALEKYLKGLLGTHSTGPMELLQFDHGQSNPTYYIRLADRQLVLRKKPSGTLLPSAHAIEREFRIMKALANAGVPVPTVLDLCEDSSIIGTPFYLMEYCPGIIYKDPSLPGLEPSRREAIYTAMNQVLCRIHSVDLQATSLDSFGKQGDYIPRQVQTWTKQYRAAETSSIPAMERLIQWLPLHLPRQQRTTLVHGDFRLDNLIFHPEKAEVLAVLDWELSTLGDPFADVAYSCLAYYLPSSFPILRGFRDQDVTKLGIPTVEEYFRMYCLNMGIPPIDNWNFYMAFSFFRVAAILQGVYKRSLTGQASSATAQQSGKLTESMAELAWDFATKEGFRVFKEMPATKTLSRSYHAWAGPRSPRTPKGVRGHSTVAAASPSHEAKGGLVISPEGLSPAVRKLYEQLVQFIEQKVYPLEPELQRHQASADRWSPSPLIEDLKEKAKAEGLWNLFLPLETDPEKKYGAGLTNVEYAHLCEVMGMSLYASEIFNCSAPDTGNMEILVRYGTEEQKARWLVPLLEGRIRSCFAMTEPQVASSDASNIEASIKEEDGCYVINGHKWWTSGILDPRCKLCVFMGKTDPQAPRHQQQSMLLVPMDSPGITVIRPLSVFGLEDPPGGHGEVRFKDVRVPKENILLGPGRGFEIAQGRLGPGRIHHCMRLIGYSERALALMKTRVMSRTAFGKPLVEQGTILADIARSRVEIEQARLLVLKAAHLMDVAGNKTAALDIAMIKMVVPSMAYHVIDRAIQAFGAAGLSSDYPLAQFFGWARALRFADGPDEVHQLTVAKMELKNQSRMQEPAVPRV.

Residue K413 is modified to N6-succinyllysine. The residue at position 427 (K427) is an N6-acetyllysine; alternate. K427 is modified (N6-succinyllysine; alternate). FAD-binding positions include 792 to 802 (FAMTEPQVASS), S828, R943, Q1013, and E1044. An N6-acetyllysine; alternate modification is found at K1052. K1052 carries the N6-succinyllysine; alternate modification.

It belongs to the acyl-CoA dehydrogenase family. FAD serves as cofactor.

The catalysed reaction is a 2,3-saturated acyl-CoA + A = a 2,3-dehydroacyl-CoA + AH2. In terms of biological role, acyl-CoA dehydrogenase only active with R- and S-2-methyl-C15-CoA. This Mus musculus (Mouse) protein is Acyl-CoA dehydrogenase family member 10 (Acad10).